A 201-amino-acid polypeptide reads, in one-letter code: Holliday junction resolvase RecU (201 aa).

Mg(2+) is bound by residues Thr87, Asp89, Glu102, and Gln121.

Belongs to the RecU family. Mg(2+) is required as a cofactor.

The protein resides in the cytoplasm. It carries out the reaction Endonucleolytic cleavage at a junction such as a reciprocal single-stranded crossover between two homologous DNA duplexes (Holliday junction).. Its function is as follows. Endonuclease that resolves Holliday junction intermediates in genetic recombination. Cleaves mobile four-strand junctions by introducing symmetrical nicks in paired strands. Promotes annealing of linear ssDNA with homologous dsDNA. Required for DNA repair, homologous recombination and chromosome segregation. The sequence is that of Holliday junction resolvase RecU from Listeria monocytogenes serotype 4b (strain F2365).